A 598-amino-acid chain; its full sequence is Nuclear receptor subfamily 4 group A member 1 (598 aa).

Disordered regions lie at residues 1–43 (MPCI…PEAA) and 128–151 (GSDY…PPQL). Low complexity predominate over residues 134–145 (SPCSAPSPSTPS). Residues 171 to 466 (RAWTEQLPKA…PAEGKLIFCS (296 aa)) are required for nuclear import. The nuclear receptor DNA-binding region spans 264–339 (EGRCAVCGDN…VGMVKEVVRT (76 aa)). NR C4-type zinc fingers lie at residues 267 to 287 (CAVC…CEGC) and 303 to 327 (CLAN…FQKC). A required for binding NBRE-containing DNA region spans residues 268 to 354 (AVCGDNASCQ…RRGRLPSKPK (87 aa)). The interval 299–361 (AKYICLANKD…KPKQPPETSP (63 aa)) is required for the interaction with RXRA. Position 341 is a phosphoserine; by PKA (serine 341). Residues 341-361 (SLKGRRGRLPSKPKQPPETSP) form a disordered region. At serine 351 the chain carries Phosphoserine; by PKA, RPS6KA1 and RPS6KA3. Residues 360 to 595 (SPAHLLTSLV…PIVDKIFMDT (236 aa)) enclose the NR LBD domain. The interval 521-544 (PRRVEELQNRIASCLKEHVSAEAG) is binds lipopolysaccharide. The interval 584-595 (PPPIVDKIFMDT) is AF-2.

The protein belongs to the nuclear hormone receptor family. NR4 subfamily. As to quaternary structure, binds the NGFI-B response element (NBRE) as a monomer. Binds the Nur response element (NurRE), consisting of two inverse NBRE-related octanucleotide repeats separated by 6 base-pairs, as a dimer. Interacts (via N-terminus) with NLRP3 (via LRR repeat domain); the interaction is direct, requires binding of NR4A1/Nur77 to NBRE-containing dsDNA and lipopolysaccharide, and leads to non-canonical NLRP3 inflammasome activation. Interacts with GADD45GIP1. Interacts with STK11. Interacts with IFI27. Heterodimer (via DNA-binding domain) with RXRA (via C-terminus); DNA-binding of the heterodimer is enhanced by 9-cis retinoic acid. Competes for the RXRA interaction with EP300 and thereby attenuates EP300 mediated acetylation of RXRA. Interacts with NCOA1. Interacts with NCOA2. Interacts with NCOA3. It depends on Zn(2+) as a cofactor. Post-translationally, phosphorylated at Ser-351 by RPS6KA1 and RPS6KA3 in response to mitogenic or stress stimuli. Acetylated by p300/CBP, acetylation increases stability. Deacetylated by HDAC1.

It localises to the nucleus. The protein resides in the cytoplasm. The protein localises to the cytosol. It is found in the mitochondrion. Orphan nuclear receptor. Binds the NGFI-B response element (NBRE) 5'-AAAGGTCA-3'. Binds 9-cis-retinoic acid outside of its ligand-binding (NR LBD) domain. Participates in energy homeostasis by sequestrating the kinase STK11 in the nucleus, thereby attenuating cytoplasmic AMPK activation. Regulates the inflammatory response in macrophages by regulating metabolic adaptations during inflammation, including repressing the transcription of genes involved in the citric acid cycle (TCA). Inhibits NF-kappa-B signaling by binding to low-affinity NF-kappa-B binding sites, such as at the IL2 promoter. May act concomitantly with NR4A2 in regulating the expression of delayed-early genes during liver regeneration. Plays a role in the vascular response to injury. Functionally, in the cytosol, upon its detection of both bacterial lipopolysaccharide (LPS) and NBRE-containing mitochondrial DNA released by GSDMD pores during pyroptosis, it promotes non-canonical NLRP3 inflammasome activation by stimulating association of NLRP3 and NEK7. The chain is Nuclear receptor subfamily 4 group A member 1 (NR4A1) from Bos taurus (Bovine).